Here is a 461-residue protein sequence, read N- to C-terminus: MSAPRGDHAILRARNLTKRVATLGPSTDVLRPDELIKFLDLVDGVRINLAHASPNEVKFRIEAVRSYEKAKNRPLAVIVDLKGPSIRVGSTSPINVQEGEVVKFKLSDKSDGTYIPVPNKAFFSAVEQNDVILMLDGRLRLKVTNTGSDWIEAVAESSGVITGGKAIVVEGKDYDISTPAEEDVEALKAISPIRDNIDYVAISLAKSCKDVDSVRSLLTELGFQSQVAVKIETKGAVNNLEELVQCSDYVVVARGDLGLHYGLDALPIVQRRIVHTSLKYGKPIAVATQLLDSMQSSPIPTRAEINDVFTTASMGVDSLWLTNETASGKYPLAAVSWLSRILMNVEYQIPQSPLLQNSRDRFAKGLVELAQDLGANILVFSMSGTLARRIAKFRPRGVVYVGTPNVRVARSLSIVWALEPLYIPAENYEEGLEKLISLKGTTPFVATYGIRGGVHSVKVKL.

Residue Arg-46 participates in substrate binding. The K(+) site is built by Asn-48 and Asp-80. Position 48-51 (48-51 (NLAH)) interacts with ATP. ATP is bound by residues Arg-87 and Lys-165. Glu-232 contributes to the Mg(2+) binding site. Gly-255, Asp-256, and Thr-288 together coordinate substrate. Position 256 (Asp-256) interacts with Mg(2+).

This sequence belongs to the pyruvate kinase family. Homotetramer. It depends on a divalent metal cation as a cofactor.

The catalysed reaction is pyruvate + ATP = phosphoenolpyruvate + ADP + H(+). The protein operates within carbohydrate degradation; glycolysis; pyruvate from D-glyceraldehyde 3-phosphate: step 5/5. With respect to regulation, not activated by classical allosteric effectors. This is Pyruvate kinase (pyk) from Pyrobaculum aerophilum (strain ATCC 51768 / DSM 7523 / JCM 9630 / CIP 104966 / NBRC 100827 / IM2).